A 107-amino-acid chain; its full sequence is Small ribosomal subunit protein bS6 (107 aa).

Belongs to the bacterial ribosomal protein bS6 family.

Binds together with bS18 to 16S ribosomal RNA. The protein is Small ribosomal subunit protein bS6 of Synechococcus elongatus (strain ATCC 33912 / PCC 7942 / FACHB-805) (Anacystis nidulans R2).